The chain runs to 270 residues: ATP synthase subunit a (270 aa).

6 consecutive transmembrane segments (helical) span residues 27 to 47 (FWTFHVDTLAWSVVLGLVFIL), 90 to 110 (IAPLALTIFVWVLLMNLMDLI), 147 to 166 (VNMTFALSLGVFALMIFYSV), 182 to 202 (PFNTPWLYWFNFILELVSLIA), 211 to 231 (LFGNLYAGELIFILIAGTLGV), and 238 to 258 (FLWAAFHLLVIPLQAFIFMML).

The protein belongs to the ATPase A chain family. F-type ATPases have 2 components, CF(1) - the catalytic core - and CF(0) - the membrane proton channel. CF(1) has five subunits: alpha(3), beta(3), gamma(1), delta(1), epsilon(1). CF(0) has three main subunits: a(1), b(2) and c(9-12). The alpha and beta chains form an alternating ring which encloses part of the gamma chain. CF(1) is attached to CF(0) by a central stalk formed by the gamma and epsilon chains, while a peripheral stalk is formed by the delta and b chains.

It is found in the cell inner membrane. In terms of biological role, key component of the proton channel; it plays a direct role in the translocation of protons across the membrane. In Pseudoalteromonas atlantica (strain T6c / ATCC BAA-1087), this protein is ATP synthase subunit a.